Reading from the N-terminus, the 224-residue chain is RNA-binding protein 24-B (224 aa).

The region spanning 11-88 is the RRM domain; the sequence is TKIFVGGLPY…RKANVNLAYL (78 aa).

It localises to the nucleus. The protein localises to the cytoplasm. Its function is as follows. Multifunctional RNA-binding protein involved in the regulation of pre-mRNA splicing, mRNA stability and mRNA translation important for cell fate decision and differentiation. Plays a major role in pre-mRNA alternative splicing regulation. Mediates preferentially muscle-specific exon inclusion in numerous mRNAs important for striated cardiac and skeletal muscle cell differentiation. Binds to intronic splicing enhancer (ISE) composed of stretches of GU-rich motifs localized in flanking intron of exon that will be included by alternative splicing. Involved in embryonic stem cell (ESC) transition to cardiac cell differentiation by promoting pre-mRNA alternative splicing events of several pluripotency and/or differentiation genes. Plays a role in the regulation of mRNA stability and mRNA translation to which it is bound. Involved in myogenic differentiation by regulating myog levels. Binds to a huge amount of mRNAs. Required for embryonic heart development, sarcomer and M-band formation in striated muscles. The protein is RNA-binding protein 24-B (rbm24-b) of Xenopus laevis (African clawed frog).